We begin with the raw amino-acid sequence, 207 residues long: UPF0328 protein ECU02_1590/ECU04_0060/ECU08_2120 (207 aa).

2 disordered regions span residues 1 to 154 (MPRP…HSHT) and 180 to 207 (GRLH…LATL). Composition is skewed to basic and acidic residues over residues 14-24 (DHPDFRSESSA) and 75-97 (HTEG…ETES). 2 stretches are compositionally biased toward polar residues: residues 98 to 121 (PKPQ…SQNT) and 133 to 149 (SRPS…QSPH).

Belongs to the UPF0328 family.

The protein is UPF0328 protein ECU02_1590/ECU04_0060/ECU08_2120 of Encephalitozoon cuniculi (strain GB-M1) (Microsporidian parasite).